We begin with the raw amino-acid sequence, 362 residues long: [LysW]-lysine hydrolase (362 aa).

A Zn(2+)-binding site is contributed by His-69. The active site involves Asp-71. A Zn(2+)-binding site is contributed by Asp-94. Catalysis depends on Glu-127, which acts as the Proton acceptor. Zn(2+) contacts are provided by Glu-128, Glu-151, and His-334.

The protein belongs to the peptidase M20A family. LysK subfamily. It depends on Zn(2+) as a cofactor. Co(2+) is required as a cofactor.

The protein localises to the cytoplasm. It catalyses the reaction [amino-group carrier protein]-C-terminal-gamma-(L-lysyl)-L-glutamate + H2O = [amino-group carrier protein]-C-terminal-L-glutamate + L-lysine. It functions in the pathway amino-acid biosynthesis; L-lysine biosynthesis via AAA pathway; L-lysine from L-alpha-aminoadipate (Thermus route): step 5/5. In terms of biological role, catalyzes the release of L-lysine from [LysW]-gamma-L-lysine. This is [LysW]-lysine hydrolase from Deinococcus radiodurans (strain ATCC 13939 / DSM 20539 / JCM 16871 / CCUG 27074 / LMG 4051 / NBRC 15346 / NCIMB 9279 / VKM B-1422 / R1).